The primary structure comprises 510 residues: D-alanine--D-alanyl carrier protein ligase (510 aa).

Position 157–158 (157–158) interacts with ATP; sequence TS. Residue aspartate 202 coordinates D-alanine. 297-302 provides a ligand contact to ATP; the sequence is NTYGPT. Valine 306 contacts D-alanine. 2 residues coordinate ATP: aspartate 389 and lysine 498. Lysine 498 is a D-alanine binding site.

Belongs to the ATP-dependent AMP-binding enzyme family. DltA subfamily.

The protein resides in the cytoplasm. The catalysed reaction is holo-[D-alanyl-carrier protein] + D-alanine + ATP = D-alanyl-[D-alanyl-carrier protein] + AMP + diphosphate. It functions in the pathway cell wall biogenesis; lipoteichoic acid biosynthesis. Catalyzes the first step in the D-alanylation of lipoteichoic acid (LTA), the activation of D-alanine and its transfer onto the D-alanyl carrier protein (Dcp) DltC. In an ATP-dependent two-step reaction, forms a high energy D-alanyl-AMP intermediate, followed by transfer of the D-alanyl residue as a thiol ester to the phosphopantheinyl prosthetic group of the Dcp. D-alanylation of LTA plays an important role in modulating the properties of the cell wall in Gram-positive bacteria, influencing the net charge of the cell wall. The protein is D-alanine--D-alanyl carrier protein ligase of Listeria welshimeri serovar 6b (strain ATCC 35897 / DSM 20650 / CCUG 15529 / CIP 8149 / NCTC 11857 / SLCC 5334 / V8).